A 405-amino-acid chain; its full sequence is Argininosuccinate synthase (405 aa).

Residues 10–18 and Ala37 contribute to the ATP site; that span reads AYSGGLDTS. L-citrulline is bound by residues Tyr88 and Ser93. Gly118 provides a ligand contact to ATP. L-aspartate-binding residues include Thr120, Asn124, and Asp125. An L-citrulline-binding site is contributed by Asn124. Residues Arg128, Ser179, Ser188, Glu264, and Tyr276 each coordinate L-citrulline.

It belongs to the argininosuccinate synthase family. Type 1 subfamily. In terms of assembly, homotetramer.

The protein localises to the cytoplasm. The enzyme catalyses L-citrulline + L-aspartate + ATP = 2-(N(omega)-L-arginino)succinate + AMP + diphosphate + H(+). The protein operates within amino-acid biosynthesis; L-arginine biosynthesis; L-arginine from L-ornithine and carbamoyl phosphate: step 2/3. This chain is Argininosuccinate synthase, found in Pseudomonas syringae pv. syringae (strain B728a).